The primary structure comprises 367 residues: Embryonic developmental protein tofu-6 (367 aa).

Residues Ala13–Asn92 enclose the RRM domain. Residues Lys298–Ala345 are required for ife-3 interaction.

As to quaternary structure, component of the pid-1 variant of the PETISCO complex (also called the pid-3, erh-2, tofu-6, and ife-3 small RNA complex) containing at least pid-1, tofu-6, ife-3, pid-3, and erh-2, which is required for the biogenesis of 21 nucleotide PIWI-interacting RNAs (piRNAs) that possess a uracil residue at the 5'-end (also called 21U-RNAs). Within the pid-1 variant of the PETISCO complex interacts with pid-1. Component of the tost-1 variant of the PETISCO complex (also called the pid-3, erh-2, tofu-6, and ife-3 small RNA complex) containing at least tost-1, tofu-6, ife-3, pid-3, and erh-2, which plays an essential role in embryogenesis. Within the tost-1 variant of the PETISCO complex interacts with tost-1. Within the pid-1 and tost-1 variants of the PETISCO complexes interacts (via C-terminus) with ife-3. Within the pid-1 and tost-1 variants of the PETISCO complexes interacts (via the RRM domain) with pid-3. Within the pid-1 and tost-1 variants of the PETISCO complexes interacts (via the RRM domain) with erh-2. In contrast to the pid-1 variant of the PETISCO complex, the tost-1 variant of the PETISCO complex plays a minor role in the biogenesis of 21U-RNAs. Interacts (via residues 120-314) with the PUCH complex subunit tofu-1 (via residues 82-172); the interaction between the PETISCO and PUCH complex members enhances piRNA production in vivo. In terms of tissue distribution, expression is restricted to the germline (at protein level).

The protein resides in the cytoplasm. It is found in the perinuclear region. It localises to the nucleus. In terms of biological role, component of the pid-1 and tost-1 variants of the PETISCO complexes, which have roles in the biogenesis of a class of 21 nucleotide PIWI-interacting RNAs (piRNAs) that possess a uracil residue at the 5'-end (also called 21U-RNAs) and embryogenesis, respectively. Promotes the biogenesis of 21U-RNAs. Mediates the interaction between the PETISCO complex and the PUCH complex, the endoribonuclease complex processing the 5'-end of precursor piRNAs, thereby enhancing mature piRNA production. Required for chromosome segregation and cell division in early embryos. May have a role in DNA replication. This chain is Embryonic developmental protein tofu-6, found in Caenorhabditis elegans.